Consider the following 439-residue polypeptide: Homeobox protein ceh-32 (439 aa).

The segment at residues 183–243 (WDGEQKTHCF…KNRRQRDRAA (61 aa)) is a DNA-binding region (homeobox). Disordered stretches follow at residues 253 to 293 (GVEL…SHIP), 344 to 365 (EEEN…KKRS), and 379 to 439 (VSPS…SQSE). Acidic residues-rich tracts occupy residues 264-274 (SDSDDDFEDSM) and 344-358 (EEEN…EADI). Positions 379-392 (VSPSQCSPCSNESL) are enriched in polar residues. The segment covering 398–428 (VKTEEVKKEDDEAAEEDSRSVKSETSEDPKH) has biased composition (basic and acidic residues).

The protein belongs to the SIX/Sine oculis homeobox family. Interacts with gmn-1. As to expression, expressed in the posterior gonad. Expressed in some cells in the head that are probably neurons. Expressed in the dorsal and ventral neuron RMD pair and the inner labial neuron class IL1. Not expressed in BAG neurons.

It localises to the nucleus. Transcription factor which binds a motif with the core sequence 5'-GTATCA-3'. Plays a role in head morphogenesis. Involved in embryonic development. Required for cell specification of the RIA interneurons. May cooperate with the transcription factor vab-3 and phosphatase eya-1 to repress transcription factor ets-5 expression in non BAG neuronal cells. This Caenorhabditis elegans protein is Homeobox protein ceh-32.